Here is a 119-residue protein sequence, read N- to C-terminus: Large ribosomal subunit protein bL19 (119 aa).

Belongs to the bacterial ribosomal protein bL19 family.

Its function is as follows. This protein is located at the 30S-50S ribosomal subunit interface and may play a role in the structure and function of the aminoacyl-tRNA binding site. In Treponema denticola (strain ATCC 35405 / DSM 14222 / CIP 103919 / JCM 8153 / KCTC 15104), this protein is Large ribosomal subunit protein bL19.